Consider the following 190-residue polypeptide: Elongation factor P-like protein (190 aa).

This sequence belongs to the elongation factor P family.

In Salmonella gallinarum (strain 287/91 / NCTC 13346), this protein is Elongation factor P-like protein.